The following is a 708-amino-acid chain: Leukotoxin translocation ATP-binding protein LktB (708 aa).

Positions 1-126 (MEANHQRNDL…ACYQGQLILV (126 aa)) constitute a Peptidase C39 domain. Residues 155–437 (FLETLIVSIF…LAQLWQDFQQ (283 aa)) enclose the ABC transmembrane type-1 domain. Helical transmembrane passes span 159-179 (LIVS…FQVV), 192-212 (LNII…LSGL), 270-290 (ALTS…MWYY), 296-316 (LVIL…SPIL), and 389-409 (VMVI…LSIG). Residues 469–704 (ISFKNIRFRY…SNGLYSYLHQ (236 aa)) form the ABC transporter domain. 503–510 (GRSGSGKS) contributes to the ATP binding site.

This sequence belongs to the ABC transporter superfamily. Protein-1 exporter (TC 3.A.1.109) family. Homodimer.

It is found in the cell inner membrane. It catalyses the reaction ATP + H2O + proteinSide 1 = ADP + phosphate + proteinSide 2.. Part of the ABC transporter complex LktBD involved in leukotoxin export. Transmembrane domains (TMD) form a pore in the inner membrane and the ATP-binding domain (NBD) is responsible for energy generation. The protein is Leukotoxin translocation ATP-binding protein LktB (lktB) of Mannheimia haemolytica (Pasteurella haemolytica).